Here is a 574-residue protein sequence, read N- to C-terminus: Streptolysin O (574 aa).

An N-terminal signal peptide occupies residues Met-1–Ser-36. Positions Asn-37–Gln-52 are enriched in low complexity. Disordered regions lie at residues Asn-37–Lys-64 and Lys-84–Glu-111. Residues Pro-53–Lys-64 show a composition bias toward basic and acidic residues. 4 beta stranded membrane-spanning segments follow: residues Lys-263–Ile-276, Ile-283–Glu-292, Ser-361–Ala-370, and Lys-378–Ser-390. Residues Glu-532 to Arg-542 carry the Conserved undecapeptide motif. The Cholesterol binding motif lies at Thr-564–Leu-565.

The protein belongs to the cholesterol-dependent cytolysin family. Homooligomeric pore complex of 35 to 50 subunits; when inserted in the host membrane.

The protein resides in the secreted. It localises to the host cell membrane. A cholesterol-dependent toxin that causes cytolysis by forming pores in cholesterol containing host membranes. After binding to target membranes, the protein undergoes a major conformation change, leading to its insertion in the host membrane and formation of an oligomeric pore complex. Cholesterol is required for binding to host membranes, membrane insertion and pore formation; cholesterol binding is mediated by a Thr-Leu pair in the C-terminus. Can be reversibly inactivated by oxidation. In Streptococcus dysgalactiae subsp. equisimilis (Streptococcus equisimilis), this protein is Streptolysin O (slo).